Consider the following 584-residue polypeptide: Protein phosphatase 2A scaffold subunit (584 aa).

HEAT repeat units follow at residues 7 to 45 (ESDD…ALGP), 46 to 84 (ERTR…FVGG), 86 to 123 (EHAV…EIPT), 168 to 206 (LRKT…VKSE), 207 to 239 (ILPL…MLTN), 240 to 278 (EENI…SMGT), 279 to 317 (EITK…LLTK), 318 to 356 (EMNI…IYGK), 358 to 395 (DTLT…VIGI), 397 to 434 (MLSQ…QLGV), 441 to 479 (LGNL…AKNN), 480 to 512 (IIPK…VVGG), 513 to 551 (DVIS…LLDS), and 553 to 584 (IVQS…LQLC).

The protein belongs to the phosphatase 2A regulatory subunit A family. As to quaternary structure, component of the Sca1 complex composed of at least gefA, gefH, scaA, phr, and the protein phosphatase 2A subunits pppA and pho2B.

Its subcellular location is the cytoplasm. The protein resides in the cytosol. It is found in the cell membrane. Its function is as follows. Scaffolding molecule which may coordinate the assembly of the catalytic subunit and a variable regulatory B subunit. Component of the Sca1 complex, a regulator of cell motility, chemotaxis and signal relay. The Sca1 complex is recruited to the plasma membrane in a chemoattractant- and F-actin-dependent manner and is enriched at the leading edge of chemotaxing cells where it regulates F-actin dynamics and signal relay by controlling the activation of rasC and the downstream target of rapamycin complex 2 (TORC2)-Akt/protein kinase B (PKB) pathway. In Dictyostelium discoideum (Social amoeba), this protein is Protein phosphatase 2A scaffold subunit (pppA).